The primary structure comprises 352 residues: RNA 3'-terminal phosphate cyclase (352 aa).

ATP-binding positions include glutamine 102 and 292-296 (HMGDQ). Histidine 318 serves as the catalytic Tele-AMP-histidine intermediate.

It belongs to the RNA 3'-terminal cyclase family. Type 1 subfamily.

The protein localises to the cytoplasm. It carries out the reaction a 3'-end 3'-phospho-ribonucleotide-RNA + ATP = a 3'-end 2',3'-cyclophospho-ribonucleotide-RNA + AMP + diphosphate. Functionally, catalyzes the conversion of 3'-phosphate to a 2',3'-cyclic phosphodiester at the end of RNA. The mechanism of action of the enzyme occurs in 3 steps: (A) adenylation of the enzyme by ATP; (B) transfer of adenylate to an RNA-N3'P to produce RNA-N3'PP5'A; (C) and attack of the adjacent 2'-hydroxyl on the 3'-phosphorus in the diester linkage to produce the cyclic end product. The biological role of this enzyme is unknown but it is likely to function in some aspects of cellular RNA processing. This Methanopyrus kandleri (strain AV19 / DSM 6324 / JCM 9639 / NBRC 100938) protein is RNA 3'-terminal phosphate cyclase.